A 180-amino-acid polypeptide reads, in one-letter code: Bifunctional protein PyrR (180 aa).

Positions 99–111 match the PRPP-binding motif; it reads VILVDDVLYTCRT.

It belongs to the purine/pyrimidine phosphoribosyltransferase family. PyrR subfamily. Homodimer and homohexamer; in equilibrium.

It catalyses the reaction UMP + diphosphate = 5-phospho-alpha-D-ribose 1-diphosphate + uracil. Its function is as follows. Regulates transcriptional attenuation of the pyrimidine nucleotide (pyr) operon by binding in a uridine-dependent manner to specific sites on pyr mRNA. This disrupts an antiterminator hairpin in the RNA and favors formation of a downstream transcription terminator, leading to a reduced expression of downstream genes. In terms of biological role, also displays a weak uracil phosphoribosyltransferase activity which is not physiologically significant. In Clostridium botulinum (strain Alaska E43 / Type E3), this protein is Bifunctional protein PyrR.